The chain runs to 163 residues: Putative C-type lectin protein FPV239 (163 aa).

In terms of domain architecture, C-type lectin spans 48-159 (CKEGWVGYNK…CFLPKKWICR (112 aa)). 2 cysteine pairs are disulfide-bonded: Cys76–Cys158 and Cys137–Cys150.

This Fowlpox virus (strain NVSL) (FPV) protein is Putative C-type lectin protein FPV239.